A 126-amino-acid polypeptide reads, in one-letter code: Follitropin subunit beta (126 aa).

The first 19 residues, 1–19 (MKLIQLCILFWCWRAICCQ), serve as a signal peptide directing secretion. Disulfide bonds link Cys21–Cys69, Cys35–Cys84, Cys38–Cys122, Cys46–Cys100, Cys50–Cys102, and Cys105–Cys112. N-linked (GlcNAc...) asparagine glycans are attached at residues Asn25 and Asn42.

This sequence belongs to the glycoprotein hormones subunit beta family. Heterodimer. The active follitropin is a heterodimer composed of an alpha chain/CGA shared with other hormones and a unique beta chain/FSHB shown here.

The protein resides in the secreted. In terms of biological role, together with the alpha chain CGA constitutes follitropin, the follicle-stimulating hormone, and provides its biological specificity to the hormone heterodimer. Binds FSHR, a G protein-coupled receptor, on target cells to activate downstream signaling pathways. Follitropin is involved in follicle development and spermatogenesis in reproductive organs. The protein is Follitropin subunit beta (FSHB) of Phodopus sungorus (Striped hairy-footed hamster).